The primary structure comprises 433 residues: Protein translocase subunit SecY (433 aa).

Transmembrane regions (helical) follow at residues 17–37, 71–91, 117–137, 141–161, 184–204, 212–232, 268–288, 310–330, 366–386, and 388–408; these read IVFT…PIPG, IFAL…LMSV, LTVL…ESIV, GPVV…TLVV, LIIF…MFEL, PLIA…IIFF, GVIP…LANF, YILL…AIVF, LTVI…LLMN, and YVIS…VVLD.

It belongs to the SecY/SEC61-alpha family. As to quaternary structure, component of the Sec protein translocase complex. Heterotrimer consisting of SecY, SecE and SecG subunits. The heterotrimers can form oligomers, although 1 heterotrimer is thought to be able to translocate proteins. Interacts with the ribosome. Interacts with SecDF, and other proteins may be involved. Interacts with SecA.

It is found in the cell inner membrane. Its function is as follows. The central subunit of the protein translocation channel SecYEG. Consists of two halves formed by TMs 1-5 and 6-10. These two domains form a lateral gate at the front which open onto the bilayer between TMs 2 and 7, and are clamped together by SecE at the back. The channel is closed by both a pore ring composed of hydrophobic SecY resides and a short helix (helix 2A) on the extracellular side of the membrane which forms a plug. The plug probably moves laterally to allow the channel to open. The ring and the pore may move independently. The chain is Protein translocase subunit SecY from Rickettsia conorii (strain ATCC VR-613 / Malish 7).